The following is a 243-amino-acid chain: Terpene cyclase dpasB (243 aa).

7 consecutive transmembrane segments (helical) span residues 16 to 36 (VVWV…SNYI), 50 to 70 (MALM…FIYP), 79 to 99 (IHTL…RYGA), 112 to 132 (LPVI…AFAE), 141 to 161 (AVSG…QLLC), 172 to 189 (LWLA…PNML), and 207 to 227 (IWFL…LWYV).

It belongs to the paxB family.

It localises to the membrane. The protein operates within secondary metabolite biosynthesis; terpenoid biosynthesis. Functionally, terpene cyclase; part of the gene cluster that mediates the biosynthesis of the diterpenoid pyrones subglutinols A and B. The first step of the pathway is the synthesis of the alpha-pyrone moiety by the polyketide synthase dpasA via condensation of one acetyl-CoA starter unit with 3 malonyl-CoA units and 2 methylations. The alpha-pyrone is then combined with geranylgeranyl pyrophosphate (GGPP) formed by the GGPP synthase dpasD through the action of the prenyltransferase dpasC to yield a linear alpha-pyrone diterpenoid. Subsequent steps in the diterpenoid pyrone biosynthetic pathway involve the decalin core formation, which is initiated by the epoxidation of the C10-C11 olefin by the FAD-dependent oxidoreductase dpasE, and is followed by a cyclization cascade catalyzed by the terpene cyclase dpasB. The FAD-linked oxidoreductase dpasF is then involved in tetrahydrofuran (THF) ring formation at the C5 unit to complete the formation of subglutinols A and B. DpasF possesses also an additional catalytic ability of multi-step oxidations to generate a new DDP analog with an enone system at the C5 named FDDP A. The sequence is that of Terpene cyclase dpasB from Apiospora sacchari (Arthrinium sacchari).